A 367-amino-acid chain; its full sequence is Flagellar P-ring protein (367 aa).

Residues 1–21 (MKIIQTFFIITLLWLSQGVQA) form the signal peptide.

This sequence belongs to the FlgI family. In terms of assembly, the basal body constitutes a major portion of the flagellar organelle and consists of four rings (L,P,S, and M) mounted on a central rod.

It localises to the periplasm. The protein resides in the bacterial flagellum basal body. Its function is as follows. Assembles around the rod to form the L-ring and probably protects the motor/basal body from shearing forces during rotation. This is Flagellar P-ring protein from Nitrosococcus oceani (strain ATCC 19707 / BCRC 17464 / JCM 30415 / NCIMB 11848 / C-107).